A 436-amino-acid polypeptide reads, in one-letter code: Citrate synthase (436 aa).

Active-site residues include His311 and Asp370.

It belongs to the citrate synthase family. Homohexamer.

It catalyses the reaction oxaloacetate + acetyl-CoA + H2O = citrate + CoA + H(+). It functions in the pathway carbohydrate metabolism; tricarboxylic acid cycle; isocitrate from oxaloacetate: step 1/2. Allosterically inhibited by NADH. This Rickettsia prowazekii (strain Madrid E) protein is Citrate synthase (gltA).